Here is a 145-residue protein sequence, read N- to C-terminus: D-aminoacyl-tRNA deacylase (145 aa).

Residues 137–138 carry the Gly-cisPro motif, important for rejection of L-amino acids motif; it reads GP.

The protein belongs to the DTD family. Homodimer.

Its subcellular location is the cytoplasm. It catalyses the reaction glycyl-tRNA(Ala) + H2O = tRNA(Ala) + glycine + H(+). The enzyme catalyses a D-aminoacyl-tRNA + H2O = a tRNA + a D-alpha-amino acid + H(+). Its function is as follows. An aminoacyl-tRNA editing enzyme that deacylates mischarged D-aminoacyl-tRNAs. Also deacylates mischarged glycyl-tRNA(Ala), protecting cells against glycine mischarging by AlaRS. Acts via tRNA-based rather than protein-based catalysis; rejects L-amino acids rather than detecting D-amino acids in the active site. By recycling D-aminoacyl-tRNA to D-amino acids and free tRNA molecules, this enzyme counteracts the toxicity associated with the formation of D-aminoacyl-tRNA entities in vivo and helps enforce protein L-homochirality. This Pseudomonas fluorescens (strain Pf0-1) protein is D-aminoacyl-tRNA deacylase.